Consider the following 321-residue polypeptide: Putative membrane-bound redox modulator Alx (321 aa).

Residues 1 to 6 (MNTVGT) are Periplasmic-facing. Residues 7 to 27 (PLLWGGFAVVVAIMLAIDLLL) form a helical membrane-spanning segment. The Cytoplasmic segment spans residues 28-43 (QGRRGAHAMTMKQAAA). A helical membrane pass occupies residues 44 to 64 (WSLVWVTLSLLFNAAFWWYLV). Over 65–89 (QTEGRAVADPQALAFLTGYLIEKSL) the chain is Periplasmic. Residues 90-110 (AVDNVFVWLMLFSYFSVPAAL) form a helical membrane-spanning segment. Residues 111 to 113 (QRR) are Cytoplasmic-facing. A helical membrane pass occupies residues 114 to 134 (VLVYGVLGAIVLRTIMIFTGS). Trp135 is a topological domain (periplasmic). A helical membrane pass occupies residues 136–156 (LISQFDWILYIFGAFLLFTGV). At 157-198 (KMALAHEDESGIGDKPLVRWLRGHLRMTDTIDNEHFFVRKNG) the chain is on the cytoplasmic side. Residues 199-219 (LLYATPLMLVLILVELSDVIF) traverse the membrane as a helical segment. Over 220 to 225 (AVDSIP) the chain is Periplasmic. The helical transmembrane segment at 226–246 (AIFAVTTDPFIVLTSNLFAIL) threads the bilayer. The Cytoplasmic segment spans residues 247 to 261 (GLRAMYFLLAGVAER). A helical transmembrane segment spans residues 262–282 (FSMLKYGLAVILVFIGIKMLI). The Periplasmic portion of the chain corresponds to 283–286 (VDFY). A helical transmembrane segment spans residues 287-307 (HIPIAVSLGVVFGILVMTFII). At 308-321 (NAWVNYRHDKQRVG) the chain is on the cytoplasmic side.

It belongs to the TerC family.

The protein resides in the cell inner membrane. Its function is as follows. Has been proposed to be a redox modulator. This chain is Putative membrane-bound redox modulator Alx (alx), found in Escherichia coli O157:H7.